The following is a 368-amino-acid chain: MISSLHRPTVATVDLQAIRDNIKAVQEHISSTTKTFAVVKANAYGHGAIQVAKAVDEEVDAFCVSNLDEALELRQAGIEKDILILGVILANEIPLAIEHSITITVASNEWLESAKACQKDLAQLHVHVKVDSGMGRIGVRSLEEANQLIAGLTKSGAHVDGIFTHFATADEENTDKFHQQLAFFTDLVNALAIKPELVHASNSATSLWHSDTIFNAVRLGIVIYGLNPSGKTLNLPYPLKPALSLSSRLVHIKKIKAGNTVGYGATYTAKTEEYVGTLPIGYADGWTRDMQGYSVIIDGHLCEIIGRVSMDQLTVRLPKAFDIGQEVTLIGQEGHQMISATDIAEKRGTINYEVLCLLSDRIPRHYIN.

The active-site Proton acceptor; specific for D-alanine is the lysine 40. N6-(pyridoxal phosphate)lysine is present on lysine 40. Residue arginine 136 coordinates substrate. Catalysis depends on tyrosine 263, which acts as the Proton acceptor; specific for L-alanine. Methionine 310 contributes to the substrate binding site.

Belongs to the alanine racemase family. It depends on pyridoxal 5'-phosphate as a cofactor.

The catalysed reaction is L-alanine = D-alanine. The protein operates within amino-acid biosynthesis; D-alanine biosynthesis; D-alanine from L-alanine: step 1/1. Functionally, catalyzes the interconversion of L-alanine and D-alanine. May also act on other amino acids. This chain is Alanine racemase (alr), found in Streptococcus uberis (strain ATCC BAA-854 / 0140J).